Reading from the N-terminus, the 305-residue chain is 5'-hydroxyaverantin dehydrogenase stcG (305 aa).

NADP(+) is bound by residues S25, L27, Q48, D68, Y186, K190, and S221. Y186 functions as the Proton acceptor in the catalytic mechanism. K190 serves as the catalytic Lowers pKa of active site Tyr.

This sequence belongs to the short-chain dehydrogenases/reductases (SDR) family.

It carries out the reaction (1'S,5'S)-5'-hydroxyaverantin + NAD(+) = (S)-5'-oxoaverantin + NADH + H(+). The catalysed reaction is (1'S,5'R)-5'-hydroxyaverantin + NAD(+) = (S)-5'-oxoaverantin + NADH + 2 H(+). Its pathway is mycotoxin biosynthesis; sterigmatocystin biosynthesis. Its function is as follows. 5'-hydroxyaverantin dehydrogenase; part of the gene cluster that mediates the biosynthesis of sterigmatocystin (ST), a polyketide-derived furanocoumarin which is part of the most toxic and carcinogenic compounds among the known mycotoxins. The first step in the biosynthesis of sterigmatocystin is the production of hexanoate by the fatty acid synthase (FAS) units stcJ and stcK. The polyketide backbone is assembled by the non-reducing polyketide synthase stcA by condensation of the starter hexanoyl-CoA and 7 malonyl-CoA extender units followed by cyclization and release of norsolorinic acid. Norsolorinic acid is the first stable intermediate in the biosynthesis of sterigmatocystin and is converted into averantin (AVN) by the ketoreductase stcE which reduces the hexanoate ketone to an alcohol. Averantin is then oxidized into 5'-hydroxyaverantin (HAVN) by the cytochrome P450 monooxygenase stcF. 5'-hydroxyaverantin is further converted to 5'-oxyaverantin (OAVN) by the 5'-hydroxyaverantin dehydrogenase stcG. The next step is the conversion of OAVN into averufin (AVF) which is catalyzed by a yet to be identified enzyme. The cytochrome P450 monooxygenase stcB and the flavin-binding monooxygenase stcW are both required for the conversion of averufin to 1-hydroxyversicolorone. The esterase stcI probably catalyzes the formation of versiconal hemiacetal acetate from 1-hydroxyversicolorone. The oxydoreductase stcN then probably catalyzes the biosynthetic step from versiconal to versicolorin B (VERB). The next step is performed by the versicolorin B desaturase stcL to produce versicolorin A (VERA). The ketoreductase stcU and the cytochrome P450 monooxygenase stcS are involved in the conversion of versicolorin A to demethylsterigmatocystin. The Baeyer-Villiger oxidas stcQ and the reductase stcR might be involved in the biosynthetic step from versicolorin A to demethylsterigmatocystin. The final step in the biosynthesis of sterigmatocystin is the methylation of demethylsterigmatocystin catalyzed by the methyltransferase stcP. The protein is 5'-hydroxyaverantin dehydrogenase stcG of Emericella nidulans (strain FGSC A4 / ATCC 38163 / CBS 112.46 / NRRL 194 / M139) (Aspergillus nidulans).